The sequence spans 518 residues: Na(+)/H(+) exchange regulatory cofactor NHE-RF3 (518 aa).

The region spanning 9 to 90 is the PDZ 1 domain; that stretch reads ECKLSKEEGQ…AVTLLVLDGN (82 aa). Phosphoserine is present on residues Ser-108, Ser-148, Ser-192, Ser-250, Ser-334, and Ser-348. 2 consecutive PDZ domains span residues 135–215 and 243–323; these read LCYL…VDKE and IVEM…VDKE. The PDZ 4 domain occupies 378 to 458; sequence LCRLDKGENG…NVTLLVCGKK (81 aa). Thr-451 is subject to Phosphothreonine. Residues 499–518 form a disordered region; that stretch reads KERAHSTASNSSSNSEDTEL. Ser-507, Ser-509, Ser-510, Ser-511, and Ser-513 each carry phosphoserine. Residues 507 to 518 are compositionally biased toward low complexity; it reads SNSSSNSEDTEL.

It belongs to the NHER family. Interacts with PDZK1IP1 and ABCC2. Interacts (via PDZ domains 1 and 3) with SCARB1 (C-terminal domain). Forms a heterodimeric complex with NHERF1. Interacts with AKAP2, BCR, CFTR, SLCO1A1, SLC22A12, SLC22A4, SLC22A5, NHERF2 and SLC17A1. Component of a complex, composed of PDZK1, SYNGAP1, KLHL17 and NMDA receptors. Interacts (via PDZ1 domain) directly with KLHL17; the interaction is important for integrity of actin cytoskeleton structures in neurons. Interacts (via C-terminal PDZ domain) with SLC9A3 (via C-terminal domain). Interacts (via the first PDZ domain) with PTGIR (via non-isoprenylated C-terminus). Binds to the C-terminal region of SLC26A3. Interacts (via C-terminal PDZ domain) with SLC26A6 (via C-terminal domain). Interacts (via PDZ domains 1 and 3) with SLC5A8 (via PDZ-binding motif); interaction increases nicotinate transport activity of SLC5A8. As to expression, highly expressed in the brush border membrane of duodenal and ileal mucosa.

Its subcellular location is the membrane. The protein resides in the cell membrane. A scaffold protein that connects plasma membrane proteins and regulatory components, regulating their surface expression in epithelial cells apical domains. May be involved in the coordination of a diverse range of regulatory processes for ion transport and second messenger cascades. In complex with NHERF1, may cluster proteins that are functionally dependent in a mutual fashion and modulate the trafficking and the activity of the associated membrane proteins. May play a role in the cellular mechanisms associated with multidrug resistance through its interaction with ABCC2 and PDZK1IP1. May potentiate the CFTR chloride channel activity. Required for normal cell-surface expression of SCARB1. Plays a role in maintaining normal plasma cholesterol levels via its effects on SCARB1. Plays a role in the normal localization and function of the chloride-anion exchanger SLC26A6 to the plasma membrane in the brush border of the proximal tubule of the kidney. May be involved in the regulation of proximal tubular Na(+)-dependent inorganic phosphate cotransport therefore playing an important role in tubule function. The polypeptide is Na(+)/H(+) exchange regulatory cofactor NHE-RF3 (PDZK1) (Oryctolagus cuniculus (Rabbit)).